Reading from the N-terminus, the 61-residue chain is Three-finger hemachatoxin (61 aa).

4 cysteine pairs are disulfide-bonded: Cys3–Cys22, Cys15–Cys39, Cys43–Cys54, and Cys55–Cys60.

This sequence belongs to the three-finger toxin family. Short-chain subfamily. Type IB cytotoxin sub-subfamily. As to expression, expressed by the venom gland.

Its subcellular location is the secreted. This protein lyses red blood cells and has cardiotoxic and hypotensive activities. This Hemachatus haemachatus (Rinkhals) protein is Three-finger hemachatoxin.